We begin with the raw amino-acid sequence, 667 residues long: Probable E3 ubiquitin-protein ligase HIP1 (667 aa).

2 disordered regions span residues 142 to 163 (NGASQGSELHGGCSHTGSNGQA) and 285 to 311 (TTAGLSSSSYDPSGGNNNSGGSQRSFR). Over residues 288–309 (GLSSSSYDPSGGNNNSGGSQRS) the composition is skewed to low complexity. The segment at 620-661 (CCICQEEYVDGDDLGTLDCGHDFHVGCVRQWLVVKNTCPICK) adopts an RING-type; atypical zinc-finger fold.

This sequence belongs to the RING-type zinc finger family. As to quaternary structure, interacts with HAL3.

It catalyses the reaction S-ubiquitinyl-[E2 ubiquitin-conjugating enzyme]-L-cysteine + [acceptor protein]-L-lysine = [E2 ubiquitin-conjugating enzyme]-L-cysteine + N(6)-ubiquitinyl-[acceptor protein]-L-lysine.. Its pathway is protein modification; protein ubiquitination. Functionally, probable E3 ubiquitin-protein ligase that functions downstream of HAL3 and is required for HAL3-regulated plant growth. Activation of HIP1 by HAL3 may lead to the degradation of cell cycle suppressors, resulting in enhancement of cell division and plant growth. The protein is Probable E3 ubiquitin-protein ligase HIP1 (HIP1) of Oryza sativa subsp. japonica (Rice).